A 136-amino-acid chain; its full sequence is MFIPKKTKYKKDFKGRISGNAKGGYTLSFGSHGLKALEPSRLTSKQIESARRSISRTLKRVGKVWIRAFCHTSVSKKPMDVRMGKGKGSVEMWVCKVKPGKILFEIGGVPLNLAREALNKAQAKLPMKCKFVSDEL.

Belongs to the universal ribosomal protein uL16 family. Part of the 50S ribosomal subunit.

Functionally, binds 23S rRNA and is also seen to make contacts with the A and possibly P site tRNAs. The chain is Large ribosomal subunit protein uL16 from Ehrlichia chaffeensis (strain ATCC CRL-10679 / Arkansas).